A 286-amino-acid polypeptide reads, in one-letter code: Bifunctional protein FolD (286 aa).

Residues 160–162 (GRS), S189, and T230 each bind NADP(+).

This sequence belongs to the tetrahydrofolate dehydrogenase/cyclohydrolase family. As to quaternary structure, homodimer.

It carries out the reaction (6R)-5,10-methylene-5,6,7,8-tetrahydrofolate + NADP(+) = (6R)-5,10-methenyltetrahydrofolate + NADPH. It catalyses the reaction (6R)-5,10-methenyltetrahydrofolate + H2O = (6R)-10-formyltetrahydrofolate + H(+). It functions in the pathway one-carbon metabolism; tetrahydrofolate interconversion. Functionally, catalyzes the oxidation of 5,10-methylenetetrahydrofolate to 5,10-methenyltetrahydrofolate and then the hydrolysis of 5,10-methenyltetrahydrofolate to 10-formyltetrahydrofolate. This is Bifunctional protein FolD from Chlamydia pneumoniae (Chlamydophila pneumoniae).